The following is a 254-amino-acid chain: Segregation and condensation protein A (254 aa).

This sequence belongs to the ScpA family. As to quaternary structure, component of a cohesin-like complex composed of ScpA, ScpB and the Smc homodimer, in which ScpA and ScpB bind to the head domain of Smc. The presence of the three proteins is required for the association of the complex with DNA.

It is found in the cytoplasm. Its function is as follows. Participates in chromosomal partition during cell division. May act via the formation of a condensin-like complex containing Smc and ScpB that pull DNA away from mid-cell into both cell halves. In Clostridium tetani (strain Massachusetts / E88), this protein is Segregation and condensation protein A.